Reading from the N-terminus, the 165-residue chain is Methylated-DNA--protein-cysteine methyltransferase (165 aa).

Residue C126 is the Nucleophile; methyl group acceptor of the active site.

Belongs to the MGMT family.

It localises to the cytoplasm. It catalyses the reaction a 6-O-methyl-2'-deoxyguanosine in DNA + L-cysteinyl-[protein] = S-methyl-L-cysteinyl-[protein] + a 2'-deoxyguanosine in DNA. It carries out the reaction a 4-O-methyl-thymidine in DNA + L-cysteinyl-[protein] = a thymidine in DNA + S-methyl-L-cysteinyl-[protein]. Involved in the cellular defense against the biological effects of O6-methylguanine (O6-MeG) and O4-methylthymine (O4-MeT) in DNA. Repairs the methylated nucleobase in DNA by stoichiometrically transferring the methyl group to a cysteine residue in the enzyme. This is a suicide reaction: the enzyme is irreversibly inactivated. The sequence is that of Methylated-DNA--protein-cysteine methyltransferase from Mycolicibacterium paratuberculosis (strain ATCC BAA-968 / K-10) (Mycobacterium paratuberculosis).